Reading from the N-terminus, the 239-residue chain is Ribonuclease PH (239 aa).

Phosphate is bound by residues Arg-86 and 124–126 (GTR).

The protein belongs to the RNase PH family. In terms of assembly, homohexameric ring arranged as a trimer of dimers.

The catalysed reaction is tRNA(n+1) + phosphate = tRNA(n) + a ribonucleoside 5'-diphosphate. Functionally, phosphorolytic 3'-5' exoribonuclease that plays an important role in tRNA 3'-end maturation. Removes nucleotide residues following the 3'-CCA terminus of tRNAs; can also add nucleotides to the ends of RNA molecules by using nucleoside diphosphates as substrates, but this may not be physiologically important. Probably plays a role in initiation of 16S rRNA degradation (leading to ribosome degradation) during starvation. The polypeptide is Ribonuclease PH (Rhodopseudomonas palustris (strain BisB18)).